A 75-amino-acid chain; its full sequence is Beta-defensin 30 (75 aa).

A signal peptide spans 1-22; the sequence is MGSLQLTLVLFVLLSYVPPVRS. 3 disulfides stabilise this stretch: Cys-35–Cys-62, Cys-42–Cys-56, and Cys-46–Cys-63.

The protein belongs to the beta-defensin family.

The protein resides in the secreted. Its function is as follows. Has antibacterial activity. In Mus musculus (Mouse), this protein is Beta-defensin 30 (Defb30).